A 393-amino-acid polypeptide reads, in one-letter code: Formate-dependent phosphoribosylglycinamide formyltransferase (393 aa).

N(1)-(5-phospho-beta-D-ribosyl)glycinamide-binding positions include 22–23 (EL) and Glu82. ATP-binding positions include Arg114, Lys155, 160-165 (SSGKGQ), 195-198 (EGLV), and Glu203. The ATP-grasp domain occupies 119 to 308 (RLAAETLQLP…EFALHVRAFL (190 aa)). Positions 267 and 279 each coordinate Mg(2+). N(1)-(5-phospho-beta-D-ribosyl)glycinamide contacts are provided by residues Asp286, Lys355, and 362 to 363 (RR).

It belongs to the PurK/PurT family. Homodimer.

It catalyses the reaction N(1)-(5-phospho-beta-D-ribosyl)glycinamide + formate + ATP = N(2)-formyl-N(1)-(5-phospho-beta-D-ribosyl)glycinamide + ADP + phosphate + H(+). It participates in purine metabolism; IMP biosynthesis via de novo pathway; N(2)-formyl-N(1)-(5-phospho-D-ribosyl)glycinamide from N(1)-(5-phospho-D-ribosyl)glycinamide (formate route): step 1/1. Functionally, involved in the de novo purine biosynthesis. Catalyzes the transfer of formate to 5-phospho-ribosyl-glycinamide (GAR), producing 5-phospho-ribosyl-N-formylglycinamide (FGAR). Formate is provided by PurU via hydrolysis of 10-formyl-tetrahydrofolate. The sequence is that of Formate-dependent phosphoribosylglycinamide formyltransferase from Yersinia pseudotuberculosis serotype O:3 (strain YPIII).